We begin with the raw amino-acid sequence, 401 residues long: MTQDASPILTSLLDTDAYKLHMQQAVFHHYRHITVAAEFRCRSDELLGVYADEIRHQVTLMGQLALTSDEFIYLSSLPFFQDDYLHWLRDFRFKPEQVSVAVHDGKLDIRIAGLWCEVIMWEVPLLAVISEIVHRRRSTQVTTDQAVQQLRTKLEQFNALSADIDITHFKLMDFGTRRRFSREIQHTVVSTLKDEFPYLVGTSNYDLARTLALAPVGTQAHEWFQAHQQISPTLANSQRVALQVWLDEYPNQLGIALTDCITMDAFLRDFDLAFANRYQGLRHDSGDPIEWGEKAIAHYEKLGIDPMKKVLVFSDNLDLEKALFLYRHFYQRIKLVFGIGTRLTCDIPDVKPLNIVIKLVECNDKPVAKLSDSPGKTICQDPAFVDQLRKAFALPLVKKAS.

Histidine 221 carries the post-translational modification Phosphohistidine; by autocatalysis.

The protein belongs to the NAPRTase family. Transiently phosphorylated on a His residue during the reaction cycle. Phosphorylation strongly increases the affinity for substrates and increases the rate of nicotinate D-ribonucleotide production. Dephosphorylation regenerates the low-affinity form of the enzyme, leading to product release.

The enzyme catalyses nicotinate + 5-phospho-alpha-D-ribose 1-diphosphate + ATP + H2O = nicotinate beta-D-ribonucleotide + ADP + phosphate + diphosphate. The protein operates within cofactor biosynthesis; NAD(+) biosynthesis; nicotinate D-ribonucleotide from nicotinate: step 1/1. Catalyzes the synthesis of beta-nicotinate D-ribonucleotide from nicotinate and 5-phospho-D-ribose 1-phosphate at the expense of ATP. The polypeptide is Nicotinate phosphoribosyltransferase (Yersinia pseudotuberculosis serotype O:1b (strain IP 31758)).